Consider the following 153-residue polypeptide: Movement protein (153 aa).

Residues 107-153 (SSSARPLPQQPAPSLTSWTPIAKHLHSHQQSISSQSPKLVRGASQRR) are disordered.

The protein belongs to the luteoviruses movement protein family.

Transports viral genome to neighboring plant cells directly through plasmosdesmata, without any budding. The movement protein allows efficient cell to cell propagation, by bypassing the host cell wall barrier. The sequence is that of Movement protein from Avena byzantina (Oat).